A 257-amino-acid polypeptide reads, in one-letter code: 3-deoxy-manno-octulosonate cytidylyltransferase (257 aa).

It belongs to the KdsB family.

It is found in the cytoplasm. It catalyses the reaction 3-deoxy-alpha-D-manno-oct-2-ulosonate + CTP = CMP-3-deoxy-beta-D-manno-octulosonate + diphosphate. It participates in nucleotide-sugar biosynthesis; CMP-3-deoxy-D-manno-octulosonate biosynthesis; CMP-3-deoxy-D-manno-octulosonate from 3-deoxy-D-manno-octulosonate and CTP: step 1/1. The protein operates within bacterial outer membrane biogenesis; lipopolysaccharide biosynthesis. Activates KDO (a required 8-carbon sugar) for incorporation into bacterial lipopolysaccharide in Gram-negative bacteria. This is 3-deoxy-manno-octulosonate cytidylyltransferase from Stenotrophomonas maltophilia (strain K279a).